Here is a 349-residue protein sequence, read N- to C-terminus: E3 ubiquitin-protein ligase SINA-like 10 (349 aa).

Positions 1-77 (MARFSVCGGD…STSDDSDREV (77 aa)) are disordered. Residues 113–149 (CPICCEPLKIPIFQCDNGHLACTLCCTKVRNRCPSCT) form an RING-type; degenerate zinc finger. The tract at residues 163–344 (VIEASRVSCL…NLQIWIGHGR (182 aa)) is SBD. An SIAH-type zinc finger spans residues 166-224 (ASRVSCLNAKYGCKESTSYGNRFSHEQVCVFTPCSCPILDCHYTGYYKDLNNHVRAEHK). C171, C178, H190, C194, C201, C206, H218, and H223 together coordinate Zn(2+).

Belongs to the SINA (Seven in absentia) family.

It catalyses the reaction S-ubiquitinyl-[E2 ubiquitin-conjugating enzyme]-L-cysteine + [acceptor protein]-L-lysine = [E2 ubiquitin-conjugating enzyme]-L-cysteine + N(6)-ubiquitinyl-[acceptor protein]-L-lysine.. The protein operates within protein modification; protein ubiquitination. Its function is as follows. E3 ubiquitin-protein ligase that mediates ubiquitination and subsequent proteasomal degradation of target proteins. E3 ubiquitin ligases accept ubiquitin from an E2 ubiquitin-conjugating enzyme in the form of a thioester and then directly transfers the ubiquitin to targeted substrates. It probably triggers the ubiquitin-mediated degradation of different substrates. This is E3 ubiquitin-protein ligase SINA-like 10 from Arabidopsis thaliana (Mouse-ear cress).